Here is a 273-residue protein sequence, read N- to C-terminus: Shikimate dehydrogenase (NADP(+)) (273 aa).

Shikimate contacts are provided by residues 14-16 (SKS) and threonine 61. The active-site Proton acceptor is lysine 65. Aspartate 77 is a binding site for NADP(+). Positions 86 and 102 each coordinate shikimate. NADP(+) is bound by residues 127–131 (GAGGA), 151–156 (NRTGAR), and methionine 215. Tyrosine 217 is a binding site for shikimate. An NADP(+)-binding site is contributed by glycine 239.

It belongs to the shikimate dehydrogenase family. In terms of assembly, homodimer.

It carries out the reaction shikimate + NADP(+) = 3-dehydroshikimate + NADPH + H(+). It functions in the pathway metabolic intermediate biosynthesis; chorismate biosynthesis; chorismate from D-erythrose 4-phosphate and phosphoenolpyruvate: step 4/7. Involved in the biosynthesis of the chorismate, which leads to the biosynthesis of aromatic amino acids. Catalyzes the reversible NADPH linked reduction of 3-dehydroshikimate (DHSA) to yield shikimate (SA). This chain is Shikimate dehydrogenase (NADP(+)), found in Thioalkalivibrio sulfidiphilus (strain HL-EbGR7).